A 183-amino-acid polypeptide reads, in one-letter code: Photosystem I assembly protein Ycf4 (183 aa).

Transmembrane regions (helical) follow at residues 21–43 (YWWA…SSRL) and 58–80 (FIPQ…TYLW).

Belongs to the Ycf4 family.

Its subcellular location is the plastid. It is found in the chloroplast thylakoid membrane. Seems to be required for the assembly of the photosystem I complex. This is Photosystem I assembly protein Ycf4 from Nephroselmis olivacea (Green alga).